The following is a 337-amino-acid chain: Phenylalanine--tRNA ligase alpha subunit (337 aa).

E252 lines the Mg(2+) pocket.

It belongs to the class-II aminoacyl-tRNA synthetase family. Phe-tRNA synthetase alpha subunit type 1 subfamily. In terms of assembly, tetramer of two alpha and two beta subunits. Mg(2+) serves as cofactor.

Its subcellular location is the cytoplasm. It carries out the reaction tRNA(Phe) + L-phenylalanine + ATP = L-phenylalanyl-tRNA(Phe) + AMP + diphosphate + H(+). The chain is Phenylalanine--tRNA ligase alpha subunit from Francisella tularensis subsp. tularensis (strain SCHU S4 / Schu 4).